We begin with the raw amino-acid sequence, 355 residues long: Cyclin-D1-binding protein 1 (355 aa).

The residue at position 2 (alanine 2) is an N-acetylalanine. Interaction with TCF3 stretches follow at residues 2–181 (ASST…VDLV) and 147–355 (ISCN…AVEL). Residues 2–187 (ASSTTPVSFL…VDLVKDAHEE (186 aa)) are interaction with RPLP0. A required for interaction with CCND1 region spans residues 2-205 (ASSTTPVSFL…DPYCGLLDDS (204 aa)). Positions 203-224 (DDSEDNSDSHHNEDGVGLPSNR) are disordered. An interaction with RPLP0 region spans residues 235–355 (LITPCLALVR…KELTQRAVEL (121 aa)).

Belongs to the CCNDBP1 family. Interacts with CCND1 and GRAP2. May also interact with COPS5, RPLP0, SIRT6, SYF2 and TCF3. In terms of processing, phosphorylated.

It localises to the cytoplasm. It is found in the nucleus. Functionally, may negatively regulate cell cycle progression. May act at least in part via inhibition of the cyclin-D1/CDK4 complex, thereby preventing phosphorylation of RB1 and blocking E2F-dependent transcription. The chain is Cyclin-D1-binding protein 1 (Ccndbp1) from Rattus norvegicus (Rat).